Consider the following 502-residue polypeptide: ATP synthase subunit alpha (502 aa).

The disordered stretch occupies residues 115–135 (VDGLGPINTTNTRPIESPAPG). 169 to 176 (GDRQTGKT) lines the ATP pocket.

Belongs to the ATPase alpha/beta chains family. In terms of assembly, F-type ATPases have 2 components, CF(1) - the catalytic core - and CF(0) - the membrane proton channel. CF(1) has five subunits: alpha(3), beta(3), gamma(1), delta(1), epsilon(1). CF(0) has three main subunits: a(1), b(2) and c(9-12). The alpha and beta chains form an alternating ring which encloses part of the gamma chain. CF(1) is attached to CF(0) by a central stalk formed by the gamma and epsilon chains, while a peripheral stalk is formed by the delta and b chains.

Its subcellular location is the cell membrane. The catalysed reaction is ATP + H2O + 4 H(+)(in) = ADP + phosphate + 5 H(+)(out). In terms of biological role, produces ATP from ADP in the presence of a proton gradient across the membrane. The alpha chain is a regulatory subunit. This Bacillus anthracis (strain A0248) protein is ATP synthase subunit alpha.